Here is a 347-residue protein sequence, read N- to C-terminus: NADH-ubiquinone oxidoreductase chain 2 (347 aa).

10 consecutive transmembrane segments (helical) span residues 4–21, 26–45, 59–79, 96–116, 122–142, 148–168, 201–221, 242–262, 274–294, and 326–346; these read LILS…LIVM, WLMV…PVLM, YFLT…INLI, IIMT…FWVP, IQLS…MSIL, AINM…GGWG, ALLN…TFML, TTIL…GFLP, DSII…YFYM, and LPPL…LMLL.

This sequence belongs to the complex I subunit 2 family. In terms of assembly, core subunit of respiratory chain NADH dehydrogenase (Complex I) which is composed of 45 different subunits. Interacts with TMEM242.

The protein localises to the mitochondrion inner membrane. It carries out the reaction a ubiquinone + NADH + 5 H(+)(in) = a ubiquinol + NAD(+) + 4 H(+)(out). Core subunit of the mitochondrial membrane respiratory chain NADH dehydrogenase (Complex I) which catalyzes electron transfer from NADH through the respiratory chain, using ubiquinone as an electron acceptor. Essential for the catalytic activity and assembly of complex I. In Syconycteris australis (Southern blossom bat), this protein is NADH-ubiquinone oxidoreductase chain 2.